The following is a 274-amino-acid chain: Shikimate dehydrogenase (NADP(+)) (274 aa).

Residues 14–16 (SKS) and threonine 61 contribute to the shikimate site. Lysine 65 functions as the Proton acceptor in the catalytic mechanism. Residue glutamate 77 coordinates NADP(+). Shikimate contacts are provided by asparagine 86 and aspartate 102. Residues 126–130 (GAGGA), 149–154 (NRTLEK), and methionine 212 each bind NADP(+). Tyrosine 214 is a binding site for shikimate. Glycine 237 provides a ligand contact to NADP(+).

The protein belongs to the shikimate dehydrogenase family. In terms of assembly, homodimer.

The catalysed reaction is shikimate + NADP(+) = 3-dehydroshikimate + NADPH + H(+). Its pathway is metabolic intermediate biosynthesis; chorismate biosynthesis; chorismate from D-erythrose 4-phosphate and phosphoenolpyruvate: step 4/7. Functionally, involved in the biosynthesis of the chorismate, which leads to the biosynthesis of aromatic amino acids. Catalyzes the reversible NADPH linked reduction of 3-dehydroshikimate (DHSA) to yield shikimate (SA). This is Shikimate dehydrogenase (NADP(+)) from Actinobacillus pleuropneumoniae serotype 5b (strain L20).